We begin with the raw amino-acid sequence, 488 residues long: UDP-N-acetylmuramate--L-alanine ligase (488 aa).

127-133 (GTHGKTT) is an ATP binding site.

The protein belongs to the MurCDEF family.

The protein localises to the cytoplasm. It carries out the reaction UDP-N-acetyl-alpha-D-muramate + L-alanine + ATP = UDP-N-acetyl-alpha-D-muramoyl-L-alanine + ADP + phosphate + H(+). It functions in the pathway cell wall biogenesis; peptidoglycan biosynthesis. Its function is as follows. Cell wall formation. This is UDP-N-acetylmuramate--L-alanine ligase from Shewanella baltica (strain OS223).